We begin with the raw amino-acid sequence, 312 residues long: DNA-directed RNA polymerase subunit alpha (312 aa).

The alpha N-terminal domain (alpha-NTD) stretch occupies residues 1–229; the sequence is MLQYQIDRIE…ELFQPLATVT (229 aa). Residues 236–312 are alpha C-terminal domain (alpha-CTD); that stretch reads IEPEPSAEAQ…ISIPQSRTSV (77 aa).

The protein belongs to the RNA polymerase alpha chain family. In cyanobacteria the RNAP catalytic core is composed of 2 alpha, 1 beta, 1 beta', 1 gamma and 1 omega subunit. When a sigma factor is associated with the core the holoenzyme is formed, which can initiate transcription.

The enzyme catalyses RNA(n) + a ribonucleoside 5'-triphosphate = RNA(n+1) + diphosphate. DNA-dependent RNA polymerase catalyzes the transcription of DNA into RNA using the four ribonucleoside triphosphates as substrates. This Synechococcus sp. (strain CC9311) protein is DNA-directed RNA polymerase subunit alpha.